A 336-amino-acid chain; its full sequence is Nucleoid-associated protein Spro_3255 (336 aa).

This sequence belongs to the YejK family.

Its subcellular location is the cytoplasm. The protein resides in the nucleoid. This Serratia proteamaculans (strain 568) protein is Nucleoid-associated protein Spro_3255.